A 139-amino-acid chain; its full sequence is Protein archease (139 aa).

The Ca(2+) site is built by D12, D138, and I139.

Belongs to the archease family.

In terms of biological role, activates the tRNA-splicing ligase complex by facilitating the enzymatic turnover of catalytic subunit RtcB. Acts by promoting the guanylylation of RtcB, a key intermediate step in tRNA ligation. Can also alter the NTP specificity of RtcB such that ATP, dGTP or ITP is used efficiently. In Saccharolobus islandicus (strain Y.G.57.14 / Yellowstone #1) (Sulfolobus islandicus), this protein is Protein archease.